Reading from the N-terminus, the 648-residue chain is ATP-dependent zinc metalloprotease FtsH 4 (648 aa).

The Cytoplasmic segment spans residues 1-6; sequence MKQSHK. A helical membrane pass occupies residues 7–27; that stretch reads TLLLWVLLIMMFLAIWQFLSP. At 28 to 111 the chain is on the periplasmic side; the sequence is DSRPATQVAF…VFFEKEDTSP (84 aa). Residues 112–132 form a helical membrane-spanning segment; that stretch reads FWPGAIMYLLPTVFLLVMFYL. Topologically, residues 133–648 are cytoplasmic; that stretch reads FMRQLQAGGG…FGTPKPAPST (516 aa). Residue 205–212 participates in ATP binding; it reads GPPGTGKT. His-427 lines the Zn(2+) pocket. Glu-428 is a catalytic residue. Zn(2+) is bound by residues His-431 and Asp-504. The tract at residues 622-648 is disordered; sequence YSDRDRAAKEKRRAASIFGTPKPAPST.

In the central section; belongs to the AAA ATPase family. This sequence in the C-terminal section; belongs to the peptidase M41 family. As to quaternary structure, homohexamer. The cofactor is Zn(2+).

The protein localises to the cell inner membrane. In terms of biological role, acts as a processive, ATP-dependent zinc metallopeptidase for both cytoplasmic and membrane proteins. Plays a role in the quality control of integral membrane proteins. The protein is ATP-dependent zinc metalloprotease FtsH 4 of Sorangium cellulosum (strain So ce56) (Polyangium cellulosum (strain So ce56)).